The chain runs to 766 residues: 5-methyltetrahydropteroyltriglutamate--homocysteine methyltransferase (766 aa).

Residues 16-19 (RELK) and Lys-117 each bind 5-methyltetrahydropteroyltri-L-glutamate. L-homocysteine-binding positions include 442–444 (IGS) and Glu-495. Residues 442–444 (IGS) and Glu-495 each bind L-methionine. 5-methyltetrahydropteroyltri-L-glutamate is bound by residues 526–527 (RC) and Trp-572. Asp-610 is a binding site for L-homocysteine. Asp-610 is a binding site for L-methionine. A 5-methyltetrahydropteroyltri-L-glutamate-binding site is contributed by Glu-616. Zn(2+) contacts are provided by His-652, Cys-654, and Glu-676. Residue His-705 is the Proton donor of the active site. A Zn(2+)-binding site is contributed by Cys-737.

The protein belongs to the vitamin-B12 independent methionine synthase family. Zn(2+) serves as cofactor.

The enzyme catalyses 5-methyltetrahydropteroyltri-L-glutamate + L-homocysteine = tetrahydropteroyltri-L-glutamate + L-methionine. The protein operates within amino-acid biosynthesis; L-methionine biosynthesis via de novo pathway; L-methionine from L-homocysteine (MetE route): step 1/1. Catalyzes the transfer of a methyl group from 5-methyltetrahydrofolate to homocysteine resulting in methionine formation. The polypeptide is 5-methyltetrahydropteroyltriglutamate--homocysteine methyltransferase (Bordetella avium (strain 197N)).